A 92-amino-acid polypeptide reads, in one-letter code: Ribonuclease P protein component 1 (92 aa).

It belongs to the eukaryotic/archaeal RNase P protein component 1 family. In terms of assembly, consists of a catalytic RNA component and at least 4-5 protein subunits.

It is found in the cytoplasm. It carries out the reaction Endonucleolytic cleavage of RNA, removing 5'-extranucleotides from tRNA precursor.. Its function is as follows. Part of ribonuclease P, a protein complex that generates mature tRNA molecules by cleaving their 5'-ends. In Desulfurococcus amylolyticus (strain DSM 18924 / JCM 16383 / VKM B-2413 / 1221n) (Desulfurococcus kamchatkensis), this protein is Ribonuclease P protein component 1.